The chain runs to 360 residues: Peptide chain release factor 1 (360 aa).

Gln235 carries the N5-methylglutamine modification.

The protein belongs to the prokaryotic/mitochondrial release factor family. In terms of processing, methylated by PrmC. Methylation increases the termination efficiency of RF1.

Its subcellular location is the cytoplasm. Functionally, peptide chain release factor 1 directs the termination of translation in response to the peptide chain termination codons UAG and UAA. The polypeptide is Peptide chain release factor 1 (Blochmanniella pennsylvanica (strain BPEN)).